A 791-amino-acid chain; its full sequence is Probable phosphoketolase (791 aa).

It belongs to the XFP family. The cofactor is thiamine diphosphate.

This Chlorobaculum tepidum (strain ATCC 49652 / DSM 12025 / NBRC 103806 / TLS) (Chlorobium tepidum) protein is Probable phosphoketolase.